A 259-amino-acid polypeptide reads, in one-letter code: MATIKEIKELLVTVKELESPIFLELEKDNRSGVQKEISKRKRAIQAELDENLRLESMLSYEKELYKQGLTLIAGIDEVGRGPLAGPVVAAAVILPKNCKIKGLNDSKKIPKKKHLEIFQAVQDQALSIGIGIIDNQVIDQVNIYEATKLAMQEAISQLSPQPEHLLIDAMKLDLPISQTSIIKGDANSLSIAAASIVAKVTRDELMKEYDQQFSGYDFATNAGYGTAKHLEGLTKLGVTPIHRTSFEPVKSLVLGKKES.

Residues 70 to 258 enclose the RNase H type-2 domain; sequence TLIAGIDEVG…VKSLVLGKKE (189 aa). A divalent metal cation-binding residues include aspartate 76, glutamate 77, and aspartate 168.

It belongs to the RNase HII family. It depends on Mn(2+) as a cofactor. Requires Mg(2+) as cofactor.

It localises to the cytoplasm. It catalyses the reaction Endonucleolytic cleavage to 5'-phosphomonoester.. In terms of biological role, endonuclease that specifically degrades the RNA of RNA-DNA hybrids. The protein is Ribonuclease HII of Streptococcus pneumoniae (strain P1031).